We begin with the raw amino-acid sequence, 629 residues long: Coiled-coil domain-containing protein 120 (629 aa).

The segment at 31–70 (RLRGLLDRQRALQEALSVKLQELRKVCLQEAELTGQLPPE) is involved in CYTH2-binding. Positions 109 to 173 (ELALEALERE…LRDFRARLGL (65 aa)) form a coiled coil. 2 stretches are compositionally biased toward low complexity: residues 209 to 219 (HSESSSLSESG) and 279 to 294 (ASPTSPTRSLPRSASS). Residues 209-356 (HSESSSLSES…LFAARTRRSN (148 aa)) form a disordered region. Positions 323-332 (RQWSGSQDSQ) are enriched in polar residues. 2 positions are modified to phosphoserine: S355 and S357. Disordered stretches follow at residues 399 to 432 (QPVPSFSSRTTGPPDPPRAARPSSAAPASRGAPR) and 602 to 629 (PSQAPLPHSRSFTAPPVSGRYGGAFTDG). The segment covering 418 to 432 (ARPSSAAPASRGAPR) has biased composition (low complexity). The residue at position 432 (R432) is an Omega-N-methylarginine.

In terms of assembly, interacts with NIN and CEP170; leading to recruit them to centrosomes. Interacts with CYTH2; this interaction is direct and stabilizes CCDC120, possibly by preventing ubiquitination. Ubiquitinated; interaction with CYTH2 may prevent ubiquitination.

It localises to the cytoplasm. The protein resides in the cytoskeleton. Its subcellular location is the microtubule organizing center. The protein localises to the centrosome. It is found in the centriole. It localises to the cell projection. The protein resides in the neuron projection. Its subcellular location is the growth cone. The protein localises to the endosome. Its function is as follows. Centriolar protein required for centriole subdistal appendage assembly and microtubule anchoring in interphase cells. Together with CCDC68, cooperate with subdistal appendage components ODF2, NIN and CEP170 for hierarchical subdistal appendage assembly. Recruits NIN and CEP170 to centrosomes. Also required for neurite growth. Localizes CYTH2 to vesicles to allow its transport along neurites, and subsequent ARF6 activation and neurite growth. The chain is Coiled-coil domain-containing protein 120 from Mus musculus (Mouse).